The following is a 470-amino-acid chain: 6-phospho-beta-galactosidase (470 aa).

5 residues coordinate D-galactose 6-phosphate: Gln19, His116, Asn159, Glu160, and Asn297. The active-site Proton donor is Glu160. The active-site Nucleophile is the Glu375. Residues Ser430, Trp431, Lys437, and Tyr439 each contribute to the D-galactose 6-phosphate site.

It belongs to the glycosyl hydrolase 1 family.

The enzyme catalyses a 6-phospho-beta-D-galactoside + H2O = D-galactose 6-phosphate + an alcohol. Its pathway is carbohydrate metabolism; lactose degradation; D-galactose 6-phosphate and beta-D-glucose from lactose 6-phosphate: step 1/1. This Staphylococcus aureus (strain MRSA252) protein is 6-phospho-beta-galactosidase.